Reading from the N-terminus, the 714-residue chain is Methyl-accepting chemotaxis protein TlpQ (714 aa).

The chain crosses the membrane as a helical span at residues 12–32; that stretch reads ITLLAGLCLLGVVALLVGLSV. Residues 50 to 290 form the Cache domain; sequence LDESARLRLE…LLGKNLAKAD (241 aa). Histamine contacts are provided by residues E170, 208-210, and D239; that span reads YFD. Residues 360–380 traverse the membrane as a helical segment; that stretch reads TWVELGLGLGAAVLGLLVLWL. Residues 383–437 form the HAMP domain; it reads RGVTRPILGVAHMLRDIASGEGDLTQRLPHTGRDELGELAGWFNRFLDKLQPIIR. The Methyl-accepting transducer domain maps to 442 to 678; the sequence is SVRDARSTAD…EINRNVAAIR (237 aa).

It belongs to the methyl-accepting chemotaxis (MCP) protein family. As to quaternary structure, homotetramer.

The protein resides in the cell membrane. In terms of biological role, chemotactic-signal transducers respond to changes in the concentration of attractants and repellents in the environment, transduce a signal from the outside to the inside of the cell, and facilitate sensory adaptation through the variation of the level of methylation. TlpQ is a chemoreceptor that binds and mediates chemotaxis to histamine, a key biological signaling molecule. It binds histamine with high affinity, which permits responses to very low histamine concentrations. Chemotaxis to histamine may play a role in the virulence of P.aeruginosa by recruiting cells at the infection site and consequently modulating the expression of quorum-sensing-dependent virulence genes. TlpQ also binds and mediates chemotaxis to polyamines such as putrescine, spermidine, cadaverine, agmatine and ethylenediamine. In addition, binds the quorum-sensing signal autoinducer 2 (AI-2), thus inducing chemotaxis toward AI-2 and biofilm formation. The protein is Methyl-accepting chemotaxis protein TlpQ of Pseudomonas aeruginosa (strain ATCC 15692 / DSM 22644 / CIP 104116 / JCM 14847 / LMG 12228 / 1C / PRS 101 / PAO1).